A 102-amino-acid chain; its full sequence is Small ribosomal subunit protein uS10 (102 aa).

It belongs to the universal ribosomal protein uS10 family. Part of the 30S ribosomal subunit.

Involved in the binding of tRNA to the ribosomes. In Geobacter metallireducens (strain ATCC 53774 / DSM 7210 / GS-15), this protein is Small ribosomal subunit protein uS10.